We begin with the raw amino-acid sequence, 303 residues long: Nucleotide-binding protein SAB0719 (303 aa).

Residue Gly18–Ser25 coordinates ATP. Asp69–Gly72 is a GTP binding site.

This sequence belongs to the RapZ-like family.

Its function is as follows. Displays ATPase and GTPase activities. This is Nucleotide-binding protein SAB0719 from Staphylococcus aureus (strain bovine RF122 / ET3-1).